Consider the following 61-residue polypeptide: Small ribosomal subunit protein uS14 (61 aa).

Zn(2+) is bound by residues C24, C27, C40, and C43.

The protein belongs to the universal ribosomal protein uS14 family. Zinc-binding uS14 subfamily. Part of the 30S ribosomal subunit. Contacts proteins S3 and S10. The cofactor is Zn(2+).

Binds 16S rRNA, required for the assembly of 30S particles and may also be responsible for determining the conformation of the 16S rRNA at the A site. The polypeptide is Small ribosomal subunit protein uS14 (Campylobacter curvus (strain 525.92)).